A 160-amino-acid chain; its full sequence is Transcription elongation factor GreA (160 aa).

The protein belongs to the GreA/GreB family.

Necessary for efficient RNA polymerase transcription elongation past template-encoded arresting sites. The arresting sites in DNA have the property of trapping a certain fraction of elongating RNA polymerases that pass through, resulting in locked ternary complexes. Cleavage of the nascent transcript by cleavage factors such as GreA or GreB allows the resumption of elongation from the new 3'terminus. GreA releases sequences of 2 to 3 nucleotides. The polypeptide is Transcription elongation factor GreA (Francisella philomiragia subsp. philomiragia (strain ATCC 25017 / CCUG 19701 / FSC 153 / O#319-036)).